Consider the following 412-residue polypeptide: Na(+)-translocating NADH-quinone reductase subunit B (412 aa).

Transmembrane regions (helical) follow at residues 57 to 77 (MILV…NVGL), 127 to 147 (VFFL…EVLF), and 163 to 183 (SILF…ALGI). Threonine 236 is subject to FMN phosphoryl threonine. Helical transmembrane passes span 270–290 (GSIG…ILFG), 297–317 (IVAG…VIGS), 322–342 (MFSM…GMMF), 358–378 (WSYG…NPAY), and 381–401 (GMML…YLVV).

This sequence belongs to the NqrB/RnfD family. As to quaternary structure, composed of six subunits; NqrA, NqrB, NqrC, NqrD, NqrE and NqrF. It depends on FMN as a cofactor.

It is found in the cell inner membrane. It carries out the reaction a ubiquinone + n Na(+)(in) + NADH + H(+) = a ubiquinol + n Na(+)(out) + NAD(+). Its function is as follows. NQR complex catalyzes the reduction of ubiquinone-1 to ubiquinol by two successive reactions, coupled with the transport of Na(+) ions from the cytoplasm to the periplasm. NqrA to NqrE are probably involved in the second step, the conversion of ubisemiquinone to ubiquinol. In Klebsiella pneumoniae (strain 342), this protein is Na(+)-translocating NADH-quinone reductase subunit B.